We begin with the raw amino-acid sequence, 298 residues long: uncharacterized protein (298 aa).

Residues 264–298 (APPPPLPCITTGPAALEDSPKASKANKGKKAKAKK) form a disordered region. Residues 287 to 298 (KANKGKKAKAKK) are compositionally biased toward basic residues.

This is an uncharacterized protein from Mus musculus (Mouse).